Reading from the N-terminus, the 424-residue chain is Histidine--tRNA ligase (424 aa).

This sequence belongs to the class-II aminoacyl-tRNA synthetase family. In terms of assembly, homodimer.

Its subcellular location is the cytoplasm. The catalysed reaction is tRNA(His) + L-histidine + ATP = L-histidyl-tRNA(His) + AMP + diphosphate + H(+). This chain is Histidine--tRNA ligase, found in Pediococcus pentosaceus (strain ATCC 25745 / CCUG 21536 / LMG 10740 / 183-1w).